The chain runs to 151 residues: Large ribosomal subunit protein uL13 (151 aa).

It belongs to the universal ribosomal protein uL13 family. As to quaternary structure, part of the 50S ribosomal subunit.

Its function is as follows. This protein is one of the early assembly proteins of the 50S ribosomal subunit, although it is not seen to bind rRNA by itself. It is important during the early stages of 50S assembly. This chain is Large ribosomal subunit protein uL13, found in Synechococcus sp. (strain JA-3-3Ab) (Cyanobacteria bacterium Yellowstone A-Prime).